A 988-amino-acid chain; its full sequence is Chitin synthase 1 (988 aa).

Residues 29 to 75 (QHHWPPSSGSSLGRAPSIPLSSSNPRSPIRPSTPSRVSTDWTRPPAP) are disordered. Over residues 44–66 (PSIPLSSSNPRSPIRPSTPSRVS) the composition is skewed to low complexity. Helical transmembrane passes span 577–596 (WLNG…KQIW), 616–636 (FISL…FYFV), 656–676 (IFVI…ILSL), 732–752 (IFTN…LMSF), 764–784 (SAQY…YAFC), 864–884 (YVVA…SEAY), and 911–931 (AIGS…EGRI). Residues 950 to 988 (AGLGSGFSESGKTGITSGSGMSGMSLSDVTSKISEKLAG) form a disordered region. Residues 957–976 (SESGKTGITSGSGMSGMSLS) show a composition bias toward low complexity.

The protein belongs to the chitin synthase family. Class II subfamily.

It is found in the cell membrane. The catalysed reaction is [(1-&gt;4)-N-acetyl-beta-D-glucosaminyl](n) + UDP-N-acetyl-alpha-D-glucosamine = [(1-&gt;4)-N-acetyl-beta-D-glucosaminyl](n+1) + UDP + H(+). Its function is as follows. Polymerizes chitin, a structural polymer of the cell wall and septum, by transferring the sugar moiety of UDP-GlcNAc to the non-reducing end of the growing chitin polymer. CHS1 mainly responsible for normal yeast cell reproductive growth. The sequence is that of Chitin synthase 1 from Exophiala dermatitidis (Black yeast-like fungus).